Here is a 743-residue protein sequence, read N- to C-terminus: MPVAEIKNATQQPSSTNRVQAYAKLEFEKFSFFVQTLQVTMGRKASNSSDCDVHLGDTKAISRQHAKIFYSFPNQRFEISVMGKNGAFVDGEFVERGKSVPLRSGTRVQIGQISFSFLLPEGSEEDGHLKETGITPLSLQQGKIAYSDEFGGKPTGSFHTVTSNQEKDLLFSHIKHESDLPLGLSPADTNISNATSIIEHPDAANAHTLASLNQPPKHLTVSPSSIQRLSPQPYVRPTSDERPIETDSSVSAPKVANHDEELKQGKSTSPSDTVLHPDLNGSPDTGDATQKPNLSYANLIARTLIANPNKKMTLGDICEWIANNWSYYRHQPPAWHNSIRHNLSLNKAFIRIPRRQNEPGKGSFWMLDPSYIDQFEGNFFRRTKKPTPSATPAAHPDTARENELAAIQTKGISAGKTEQLNPQKETSRSKTHTSRGENVEDRPQSLLQNGIQPIIMRDGKLALNPEFFKNANGEQQAPNEQAVQAISLLQQHINKQLGPAAANNPEQATAIANALAVALAQKLQKQQTQMQGPQQVQQQAKRRKAYTSQQLNPAPTAMPHPNITSPSPSISVTQRPAVNVGPPPYVRPSAPSKLPDTRQSIGDPLPPGAMANVSAGPSSVRSSSYNSTASESKSEITSHQNLHTIPINKPFTSDRPLYSSPNDTLERVETGNQGQRMNSIGNASSFSKRDIMENENGSFDTNAKNGNNVDDSSSVRGMNLPSNSSDALRGVKRPLDETSSSYT.

The FHA domain maps to 39-94; that stretch reads VTMGRKASNSSDCDVHLGDTKAISRQHAKIFYSFPNQRFEISVMGKNGAFVDGEFV. Disordered stretches follow at residues 214 to 291, 411 to 450, and 529 to 743; these read QPPK…ATQK, GISAGKTEQLNPQKETSRSKTHTSRGENVEDRPQSLLQNG, and QMQG…SSYT. The span at 221–230 shows a compositional bias: polar residues; it reads VSPSSIQRLS. Residues 291 to 385 constitute a DNA-binding region (fork-head); the sequence is KPNLSYANLI…EGNFFRRTKK (95 aa). Over residues 434-443 the composition is skewed to basic and acidic residues; that stretch reads SRGENVEDRP. The segment covering 529–539 has biased composition (low complexity); sequence QMQGPQQVQQQ. The span at 562 to 576 shows a compositional bias: polar residues; that stretch reads NITSPSPSISVTQRP. The segment covering 614-624 has biased composition (low complexity); the sequence is SAGPSSVRSSS. Composition is skewed to polar residues over residues 625-643, 670-686, and 695-726; these read YNSTASESKSEITSHQNLH, TGNQGQRMNSIGNASSF, and ENGSFDTNAKNGNNVDDSSSVRGMNLPSNSSD.

Its subcellular location is the nucleus. Functionally, acts as a transcriptional activator for ribosomal protein genes (RPG) that contain a HomolE UAS (upstream activating sequence) in addition to a HomolD promoter element; HomolD plays the role of a TATA box in RPG promoters that do not contain a canonical TATA sequence. Binds to HomolE elements with consensus sequence 3'-ACCCTACCCT-5' (or its inverted form AGGGTAGGGT). The chain is Fork head transcription factor 1 from Schizosaccharomyces pombe (strain 972 / ATCC 24843) (Fission yeast).